The primary structure comprises 144 residues: Large ribosomal subunit protein uL16 (144 aa).

Belongs to the universal ribosomal protein uL16 family. As to quaternary structure, part of the 50S ribosomal subunit.

In terms of biological role, binds 23S rRNA and is also seen to make contacts with the A and possibly P site tRNAs. This Latilactobacillus sakei subsp. sakei (strain 23K) (Lactobacillus sakei subsp. sakei) protein is Large ribosomal subunit protein uL16.